Reading from the N-terminus, the 354-residue chain is MVLNANHLQTKKTIKETLLAPRFYTTDFDEISRYDISSNFEEIEAIVNEFRSDYNKKHFIRDEEFDRHWSQIDAQTKQMFVEFLERSCTAEFSGFLLYKELARKLKEKMPVLAEGFLLMSRDEARHAGFLNKAMADFNLTLDLGFMTKNRRYTFFKPKFIFYATYLSEKIGYWRYITIYRHLEKHPEHRIYPIFKFFESWCQDENRHGDFFAAIVKSQPYLLEGFISKLWCRFFLLAVFATMYLNDCQRGEFYKSIGLDPRQFDIYVIQKTNESAAKLFPTVLDLDNPRFFECLDKCACYNKLLLEIDDREQPFFNQVLNVFYKFYLYFLLVLNFIMLYFLRTVNCNSFTRMVK.

This sequence belongs to the AcsF family. The cofactor is Fe cation.

Its subcellular location is the plastid. The protein localises to the chloroplast. The catalysed reaction is Mg-protoporphyrin IX 13-monomethyl ester + 3 NADPH + 3 O2 + 2 H(+) = 3,8-divinyl protochlorophyllide a + 3 NADP(+) + 5 H2O. It functions in the pathway porphyrin-containing compound metabolism; chlorophyll biosynthesis (light-independent). In terms of biological role, catalyzes the formation of the isocyclic ring in chlorophyll biosynthesis. Mediates the cyclase reaction, which results in the formation of divinylprotochlorophyllide (Pchlide) characteristic of all chlorophylls from magnesium-protoporphyrin IX 13-monomethyl ester (MgPMME). The protein is Magnesium-protoporphyrin IX monomethyl ester [oxidative] cyclase of Cyanidium caldarium (Red alga).